A 211-amino-acid polypeptide reads, in one-letter code: Large ribosomal subunit protein uL3 (211 aa).

A disordered region spans residues 122-156 (NQKRNNFGRGPMSHGSKNHRAPGSIGAGTTPGRVY).

Belongs to the universal ribosomal protein uL3 family. In terms of assembly, part of the 50S ribosomal subunit. Forms a cluster with proteins L14 and L19.

In terms of biological role, one of the primary rRNA binding proteins, it binds directly near the 3'-end of the 23S rRNA, where it nucleates assembly of the 50S subunit. This chain is Large ribosomal subunit protein uL3, found in Nostoc sp. (strain PCC 7120 / SAG 25.82 / UTEX 2576).